We begin with the raw amino-acid sequence, 169 residues long: Aspartic protease inhibitor 6 (169 aa).

Residue Asn-1 is glycosylated (N-linked (GlcNAc...) asparagine). 2 disulfides stabilise this stretch: Cys-30/Cys-75 and Cys-124/Cys-134.

This sequence belongs to the protease inhibitor I3 (leguminous Kunitz-type inhibitor) family.

The protein resides in the vacuole. Inhibitor of cathepsin D (aspartic protease). May also inhibit trypsin and chymotrypsin (serine proteases). Protects the plant by inhibiting proteases of invading organisms. The sequence is that of Aspartic protease inhibitor 6 from Solanum tuberosum (Potato).